Reading from the N-terminus, the 382-residue chain is Proton extrusion protein PxcA (382 aa).

The next 4 helical transmembrane spans lie at 156–176 (TLIS…VQQI), 257–277 (AIKN…VCII), 305–325 (IILF…QVLL), and 340–360 (FILL…KYWI).

Belongs to the CemA family.

It localises to the cell inner membrane. Required for H(+) efflux immediately after light irradiation to form a rapid H(+) concentration gradient across the thylakoid membranes. Together with PxcL, contributes to transient H(+) uptake following dark to light transition. This Prochlorococcus marinus (strain MIT 9313) protein is Proton extrusion protein PxcA.